The following is a 487-amino-acid chain: Fatty acid desaturase 2-like protein FADS2B (487 aa).

Over residues 1-11 the composition is skewed to basic and acidic residues; sequence MKLEEKLEHNE. Residues 1–20 form a disordered region; the sequence is MKLEEKLEHNESLVGKSRPC. Over 1-175 the chain is Cytoplasmic; it reads MKLEEKLEHN…AMNMFSANLR (175 aa). One can recognise a Cytochrome b5 heme-binding domain in the interval 62–139; the sequence is LNLYTWQEIQ…LKPLLIGELS (78 aa). 2 residues coordinate heme: His-97 and His-120. Residues 176–196 traverse the membrane as a helical segment; it reads FFFLHLAQILILEISAWLILH. At 197-201 the chain is on the lumenal side; sequence HFGSS. The chain crosses the membrane as a helical span at residues 202–222; sequence WLVTILISFLLTVSQAQCSFL. Residues 223–307 are Cytoplasmic-facing; sequence QHDLGHLSMF…IKYIDYEKQH (85 aa). The Histidine box-1 signature appears at 224–228; that stretch reads HDLGH. The short motif at 261-265 is the Histidine box-2 element; sequence HFQHH. Residues 308-328 traverse the membrane as a helical segment; the sequence is LYFYMVALPFLMPVYFNLQSM. Topologically, residues 329-349 are lumenal; the sequence is QVMYLRKYWMDIAWVSSFYIR. A helical transmembrane segment spans residues 350 to 370; the sequence is YFITFGPFYGIFGTVLLIYLV. Over 371–487 the chain is Cytoplasmic; that stretch reads KFIESPWIAY…ASLWMNAYYE (117 aa). Positions 426-430 match the Histidine box-3 motif; that stretch reads QIEHH.

It belongs to the fatty acid desaturase type 1 family.

The protein resides in the endoplasmic reticulum membrane. Its pathway is lipid metabolism; polyunsaturated fatty acid biosynthesis. The chain is Fatty acid desaturase 2-like protein FADS2B from Mus musculus (Mouse).